A 190-amino-acid polypeptide reads, in one-letter code: Dirigent protein 15 (190 aa).

A signal peptide spans 1-19; sequence MKSTLIIFFTLCLSMAVMA. N-linked (GlcNAc...) asparagine glycans are attached at residues Asn-63 and Asn-128.

The protein belongs to the plant dirigent protein family. In terms of assembly, homodimer.

Its subcellular location is the secreted. The protein resides in the extracellular space. It localises to the apoplast. Its function is as follows. Dirigent proteins impart stereoselectivity on the phenoxy radical-coupling reaction, yielding optically active lignans from two molecules of coniferyl alcohol in the biosynthesis of lignans, flavonolignans, and alkaloids and thus plays a central role in plant secondary metabolism. The protein is Dirigent protein 15 (DIR15) of Arabidopsis thaliana (Mouse-ear cress).